A 104-amino-acid chain; its full sequence is ATP-dependent Clp protease adapter protein ClpS (104 aa).

The protein belongs to the ClpS family. In terms of assembly, binds to the N-terminal domain of the chaperone ClpA.

Its function is as follows. Involved in the modulation of the specificity of the ClpAP-mediated ATP-dependent protein degradation. The protein is ATP-dependent Clp protease adapter protein ClpS of Hydrogenovibrio crunogenus (strain DSM 25203 / XCL-2) (Thiomicrospira crunogena).